A 191-amino-acid chain; its full sequence is Putative RNA-binding protein EEED8.4 (191 aa).

The RRM domain maps to K55–T132. Residues G136–P160 are disordered.

This is Putative RNA-binding protein EEED8.4 from Caenorhabditis elegans.